We begin with the raw amino-acid sequence, 358 residues long: Alanine racemase (358 aa).

Catalysis depends on lysine 35, which acts as the Proton acceptor; specific for D-alanine. An N6-(pyridoxal phosphate)lysine modification is found at lysine 35. Position 130 (arginine 130) interacts with substrate. The Proton acceptor; specific for L-alanine role is filled by tyrosine 255. Residue methionine 303 coordinates substrate.

It belongs to the alanine racemase family. The cofactor is pyridoxal 5'-phosphate.

It carries out the reaction L-alanine = D-alanine. The protein operates within amino-acid biosynthesis; D-alanine biosynthesis; D-alanine from L-alanine: step 1/1. Catalyzes the interconversion of L-alanine and D-alanine. May also act on other amino acids. The polypeptide is Alanine racemase (alr) (Shewanella sp. (strain W3-18-1)).